A 264-amino-acid polypeptide reads, in one-letter code: Indole-3-glycerol phosphate synthase (264 aa).

Belongs to the TrpC family.

It catalyses the reaction 1-(2-carboxyphenylamino)-1-deoxy-D-ribulose 5-phosphate + H(+) = (1S,2R)-1-C-(indol-3-yl)glycerol 3-phosphate + CO2 + H2O. It functions in the pathway amino-acid biosynthesis; L-tryptophan biosynthesis; L-tryptophan from chorismate: step 4/5. This chain is Indole-3-glycerol phosphate synthase, found in Polaromonas sp. (strain JS666 / ATCC BAA-500).